We begin with the raw amino-acid sequence, 120 residues long: Large ribosomal subunit protein uL18 (120 aa).

Belongs to the universal ribosomal protein uL18 family. In terms of assembly, part of the 50S ribosomal subunit; part of the 5S rRNA/L5/L18/L25 subcomplex. Contacts the 5S and 23S rRNAs.

Functionally, this is one of the proteins that bind and probably mediate the attachment of the 5S RNA into the large ribosomal subunit, where it forms part of the central protuberance. This Agrobacterium fabrum (strain C58 / ATCC 33970) (Agrobacterium tumefaciens (strain C58)) protein is Large ribosomal subunit protein uL18.